Here is a 291-residue protein sequence, read N- to C-terminus: Ribosomal large subunit pseudouridine synthase B (291 aa).

The S4 RNA-binding domain maps to 3 to 75 (EKLQKVLARA…ICRVLAYYKP (73 aa)). The active-site Nucleophile is aspartate 110. The interval 256-291 (VEKDRRRMKANQIRRAVKRHSQVSGGRRSGGRNNNG) is disordered.

The protein belongs to the pseudouridine synthase RsuA family.

The enzyme catalyses uridine(2605) in 23S rRNA = pseudouridine(2605) in 23S rRNA. Functionally, responsible for synthesis of pseudouridine from uracil-2605 in 23S ribosomal RNA. This is Ribosomal large subunit pseudouridine synthase B (rluB) from Escherichia coli (strain K12).